Consider the following 211-residue polypeptide: C-type lectin domain-containing protein 158 (211 aa).

The signal sequence occupies residues 1–16; the sequence is MQKFILSAFVVALVAA.

The protein is C-type lectin domain-containing protein 158 (clec-158) of Caenorhabditis elegans.